The chain runs to 98 residues: Large ribosomal subunit protein uL23 (98 aa).

Belongs to the universal ribosomal protein uL23 family. As to quaternary structure, part of the 50S ribosomal subunit. Contacts protein L29, and trigger factor when it is bound to the ribosome.

One of the early assembly proteins it binds 23S rRNA. One of the proteins that surrounds the polypeptide exit tunnel on the outside of the ribosome. Forms the main docking site for trigger factor binding to the ribosome. This chain is Large ribosomal subunit protein uL23, found in Chromohalobacter salexigens (strain ATCC BAA-138 / DSM 3043 / CIP 106854 / NCIMB 13768 / 1H11).